The chain runs to 192 residues: Ion-translocating oxidoreductase complex subunit A (192 aa).

The next 6 membrane-spanning stretches (helical) occupy residues 5 to 25, 39 to 59, 67 to 87, 102 to 122, 134 to 154, and 171 to 191; these read VLLL…FLGL, IGMG…AYLV, LGIE…VVQF, LLGI…VALL, IIYG…FASM, and SIAM…TGLV.

This sequence belongs to the NqrDE/RnfAE family. As to quaternary structure, the complex is composed of six subunits: RnfA, RnfB, RnfC, RnfD, RnfE and RnfG.

The protein localises to the cell inner membrane. Its function is as follows. Part of a membrane-bound complex that couples electron transfer with translocation of ions across the membrane. The chain is Ion-translocating oxidoreductase complex subunit A from Vibrio parahaemolyticus serotype O3:K6 (strain RIMD 2210633).